A 240-amino-acid polypeptide reads, in one-letter code: Phosphatidylserine decarboxylase proenzyme (240 aa).

The Schiff-base intermediate with substrate; via pyruvic acid role is filled by Ser205. At Ser205 the chain carries Pyruvic acid (Ser); by autocatalysis.

This sequence belongs to the phosphatidylserine decarboxylase family. PSD-A subfamily. Heterodimer of a large membrane-associated beta subunit and a small pyruvoyl-containing alpha subunit. Pyruvate is required as a cofactor. Post-translationally, is synthesized initially as an inactive proenzyme. Formation of the active enzyme involves a self-maturation process in which the active site pyruvoyl group is generated from an internal serine residue via an autocatalytic post-translational modification. Two non-identical subunits are generated from the proenzyme in this reaction, and the pyruvate is formed at the N-terminus of the alpha chain, which is derived from the carboxyl end of the proenzyme. The post-translation cleavage follows an unusual pathway, termed non-hydrolytic serinolysis, in which the side chain hydroxyl group of the serine supplies its oxygen atom to form the C-terminus of the beta chain, while the remainder of the serine residue undergoes an oxidative deamination to produce ammonia and the pyruvoyl prosthetic group on the alpha chain.

It is found in the cell membrane. The enzyme catalyses a 1,2-diacyl-sn-glycero-3-phospho-L-serine + H(+) = a 1,2-diacyl-sn-glycero-3-phosphoethanolamine + CO2. It functions in the pathway phospholipid metabolism; phosphatidylethanolamine biosynthesis; phosphatidylethanolamine from CDP-diacylglycerol: step 2/2. Its function is as follows. Catalyzes the formation of phosphatidylethanolamine (PtdEtn) from phosphatidylserine (PtdSer). The protein is Phosphatidylserine decarboxylase proenzyme of Rhodopirellula baltica (strain DSM 10527 / NCIMB 13988 / SH1).